The primary structure comprises 189 residues: Protein GrpE (189 aa).

A disordered region spans residues 1–31; it reads MSKKHMKGNGGEVPENSEMSGSEELVAVEPG.

This sequence belongs to the GrpE family. Homodimer.

The protein localises to the cytoplasm. Functionally, participates actively in the response to hyperosmotic and heat shock by preventing the aggregation of stress-denatured proteins, in association with DnaK and GrpE. It is the nucleotide exchange factor for DnaK and may function as a thermosensor. Unfolded proteins bind initially to DnaJ; upon interaction with the DnaJ-bound protein, DnaK hydrolyzes its bound ATP, resulting in the formation of a stable complex. GrpE releases ADP from DnaK; ATP binding to DnaK triggers the release of the substrate protein, thus completing the reaction cycle. Several rounds of ATP-dependent interactions between DnaJ, DnaK and GrpE are required for fully efficient folding. This is Protein GrpE from Syntrophobacter fumaroxidans (strain DSM 10017 / MPOB).